The primary structure comprises 258 residues: Membrane-associated protein Vipp1 (258 aa).

The segment at 217 to 258 (MLPPATPVTQAQLPPQQETTPAKSNEVVDAELDSLRKQLDQL) is disordered. Residues 223–239 (PVTQAQLPPQQETTPAK) show a composition bias toward polar residues. Residues 249–258 (DSLRKQLDQL) are compositionally biased toward basic and acidic residues.

This sequence belongs to the PspA/Vipp/IM30 family. Polymerizes to form rings, filaments and ribbons. Rings are formed by stacked rungs that tilt to give a dome-shaped curvature. Rings form with symmetries ranging from C11 (55 subunits) to C17 (119 subunits).

It is found in the cell inner membrane. In terms of biological role, a membrane remodeling protein capable of forming rings and/or filaments on membranes, which then curve and tubulate the bilayer. Rings will form on liposomes, altering their positive curvature so the lipid bilayer is remodeled into a negative curve as the membrane enters the ring. Ring stacks of varying lengths can be seen joining isolated liposomes. A lipid monolayer can be drawn into the center of the rings. Required for thylakoid formation. The protein is Membrane-associated protein Vipp1 of Nostoc punctiforme (strain ATCC 29133 / PCC 73102).